We begin with the raw amino-acid sequence, 304 residues long: D-alanine--D-alanine ligase (304 aa).

The region spanning 104–299 (KMVWLSCGLP…FEALCLAILA (196 aa)) is the ATP-grasp domain. 130–185 (ARDLGLPIFVKPVHEGSSMGATKVTEAGQLRAAWELAARYDSLVIAEEFISGQELT) serves as a coordination point for ATP. Mg(2+) contacts are provided by Asp253, Glu266, and Asn268.

Belongs to the D-alanine--D-alanine ligase family. Mg(2+) is required as a cofactor. The cofactor is Mn(2+).

The protein localises to the cytoplasm. The enzyme catalyses 2 D-alanine + ATP = D-alanyl-D-alanine + ADP + phosphate + H(+). The protein operates within cell wall biogenesis; peptidoglycan biosynthesis. Cell wall formation. This Azoarcus sp. (strain BH72) protein is D-alanine--D-alanine ligase.